The following is a 479-amino-acid chain: Deoxyribodipyrimidine photo-lyase (479 aa).

The Photolyase/cryptochrome alpha/beta domain occupies 6 to 132; it reads APVIVWFRKD…TVRSFSGQLL (127 aa). Tyr226 provides a ligand contact to FAD. DNA is bound at residue Arg230. FAD-binding positions include 238 to 242 and 277 to 284; these read TSLLS and EIVWREFC. Interaction with DNA regions lie at residues 277-284 and 343-344; these read EIVWREFC and NR. 374–376 provides a ligand contact to FAD; sequence DAD. Gln406 serves as a coordination point for DNA.

Belongs to the DNA photolyase class-3 family. It depends on FAD as a cofactor. Requires (6R)-5,10-methylene-5,6,7,8-tetrahydrofolate as cofactor.

The catalysed reaction is cyclobutadipyrimidine (in DNA) = 2 pyrimidine residues (in DNA).. In terms of biological role, photolyase involved in the repair of UV radiation-induced DNA damage. By using blue-light energy, catalyzes the photoreactivation of cyclobutane pyrimidine dimers (CPDs), which are formed between adjacent bases on the same DNA strand upon exposure to ultraviolet radiation. Can repair CPD lesions in ssDNA as well as in dsDNA. This chain is Deoxyribodipyrimidine photo-lyase, found in Agrobacterium fabrum (strain C58 / ATCC 33970) (Agrobacterium tumefaciens (strain C58)).